The sequence spans 128 residues: Large ribosomal subunit protein bL19 (128 aa).

The protein belongs to the bacterial ribosomal protein bL19 family.

This protein is located at the 30S-50S ribosomal subunit interface and may play a role in the structure and function of the aminoacyl-tRNA binding site. This Ralstonia nicotianae (strain ATCC BAA-1114 / GMI1000) (Ralstonia solanacearum) protein is Large ribosomal subunit protein bL19.